The chain runs to 117 residues: Immunoglobulin kappa variable 1D-16 (117 aa).

An N-terminal signal peptide occupies residues 1-22 (MDMRVLAQLLGLLLLCFPGARC). Positions 23–45 (DIQMTQSPSSLSASVGDRVTITC) are framework-1. The Ig-like domain occupies 24 to 117 (IQMTQSPSSL…YYCQQYNSYP (94 aa)). A disulfide bridge connects residues Cys-45 and Cys-110. The segment at 46–56 (RASQGISSWLA) is complementarity-determining-1. The framework-2 stretch occupies residues 57-71 (WYQQKPEKAPKSLIY). The segment at 72–78 (AASSLQS) is complementarity-determining-2. The interval 79-110 (GVPSRFSGSGSGTDFTLTISSLQPEDFATYYC) is framework-3. The interval 111–117 (QQYNSYP) is complementarity-determining-3.

As to quaternary structure, immunoglobulins are composed of two identical heavy chains and two identical light chains; disulfide-linked.

It is found in the secreted. The protein resides in the cell membrane. Its function is as follows. V region of the variable domain of immunoglobulin light chains that participates in the antigen recognition. Immunoglobulins, also known as antibodies, are membrane-bound or secreted glycoproteins produced by B lymphocytes. In the recognition phase of humoral immunity, the membrane-bound immunoglobulins serve as receptors which, upon binding of a specific antigen, trigger the clonal expansion and differentiation of B lymphocytes into immunoglobulins-secreting plasma cells. Secreted immunoglobulins mediate the effector phase of humoral immunity, which results in the elimination of bound antigens. The antigen binding site is formed by the variable domain of one heavy chain, together with that of its associated light chain. Thus, each immunoglobulin has two antigen binding sites with remarkable affinity for a particular antigen. The variable domains are assembled by a process called V-(D)-J rearrangement and can then be subjected to somatic hypermutations which, after exposure to antigen and selection, allow affinity maturation for a particular antigen. The sequence is that of Immunoglobulin kappa variable 1D-16 from Homo sapiens (Human).